Reading from the N-terminus, the 288-residue chain is uncharacterized protein (288 aa).

A compositionally biased stretch (basic and acidic residues) spans 1–12; the sequence is MTEGRCAQHPDG. Positions 1-20 are disordered; it reads MTEGRCAQHPDGLDVQDVCD.

This sequence belongs to the class IV-like SAM-binding methyltransferase superfamily. RNA methyltransferase TrmH family.

This is an uncharacterized protein from Mycobacterium tuberculosis (strain ATCC 25618 / H37Rv).